The chain runs to 119 residues: Protein TusC (119 aa).

This sequence belongs to the DsrF/TusC family. Heterohexamer, formed by a dimer of trimers. The hexameric TusBCD complex contains 2 copies each of TusB, TusC and TusD. The TusBCD complex interacts with TusE.

The protein localises to the cytoplasm. Functionally, part of a sulfur-relay system required for 2-thiolation of 5-methylaminomethyl-2-thiouridine (mnm(5)s(2)U) at tRNA wobble positions. This chain is Protein TusC, found in Pectobacterium atrosepticum (strain SCRI 1043 / ATCC BAA-672) (Erwinia carotovora subsp. atroseptica).